The primary structure comprises 548 residues: Ran-binding protein 9 (548 aa).

Residues 1–23 (MSSPPLHGLSSVGHLSRDPPPRS) form a disordered region. Residues 2 to 189 (SSPPLHGLSS…VDANFGQSPF (188 aa)) enclose the B30.2/SPRY domain. The region spanning 217 to 249 (WQSMIQRMVSSYLVHHGYCSTAEAFAKSTDQTV) is the LisH domain. One can recognise a CTLH domain in the interval 255 to 312 (SIKNRQRIQKLVLSGRMGEAIETTQQLYPSLLERNPNLLFTLKVRQFIEMVNGTDSEV).

It belongs to the RANBP9/10 family. In terms of assembly, identified in the CTLH complex that contains at least MAEA, RMND5A (or alternatively its paralog RMND5B), GID8, WDR26, and RANBP9 and/or RANBP10.

The protein localises to the cytoplasm. It is found in the cell membrane. Its subcellular location is the nucleus. In terms of biological role, may act as scaffolding protein, and as adapter protein to couple membrane receptors to intracellular signaling pathways. Acts as a mediator of cell spreading and actin cytoskeleton rearrangement. Core component of the CTLH E3 ubiquitin-protein ligase complex that mediates ubiquitination and subsequent proteasomal degradation of target proteins. This Xenopus laevis (African clawed frog) protein is Ran-binding protein 9 (ranbp9).